We begin with the raw amino-acid sequence, 793 residues long: uncharacterized protein (793 aa).

The first 21 residues, 1 to 21 (MLKKTLLAYTIGFAFSPPANA), serve as a signal peptide directing secretion. Cys769 and Cys792 are oxidised to a cystine.

The protein belongs to the fimbrial export usher family.

The protein resides in the cell outer membrane. Functionally, involved in the export and assembly of a fimbrial subunit across the outer membrane. This is an uncharacterized protein from Escherichia coli (strain K12).